Reading from the N-terminus, the 113-residue chain is Iron-sulfur cluster insertion protein ErpA (113 aa).

Positions 41, 105, and 107 each coordinate iron-sulfur cluster.

The protein belongs to the HesB/IscA family. In terms of assembly, homodimer. Iron-sulfur cluster serves as cofactor.

Functionally, required for insertion of 4Fe-4S clusters for at least IspG. The sequence is that of Iron-sulfur cluster insertion protein ErpA from Colwellia psychrerythraea (strain 34H / ATCC BAA-681) (Vibrio psychroerythus).